The following is a 116-amino-acid chain: MYEQAIVIRNDLKMGKGKMAAQACHASIQAFLHAQKISSSAVSGWMNEGQKKVVLKVNSEKELLEIFKNVNIEGLPCSLIRDAGRTQIEPGSLTAVGIGPEKEEKISKVKKDLKLL.

This sequence belongs to the PTH2 family.

The protein localises to the cytoplasm. The catalysed reaction is an N-acyl-L-alpha-aminoacyl-tRNA + H2O = an N-acyl-L-amino acid + a tRNA + H(+). The natural substrate for this enzyme may be peptidyl-tRNAs which drop off the ribosome during protein synthesis. The chain is Peptidyl-tRNA hydrolase (pth) from Methanococcus maripaludis (strain DSM 14266 / JCM 13030 / NBRC 101832 / S2 / LL).